The chain runs to 631 residues: ATP-dependent RNA helicase mrh4, mitochondrial (631 aa).

Residues 1-45 constitute a mitochondrion transit peptide; it reads MNRLGRLPLPLPPSVCLFCQSRATTPLPPSLQATRSMATARLRRR. The segment at 68 to 111 is disordered; the sequence is KERFGPFAGMNQTEARIRDKPRTRSRAAQKRSGEPEEDSQKESP. The segment covering 98 to 108 has biased composition (basic and acidic residues); sequence RSGEPEEDSQK. The Q motif signature appears at 141–174; the sequence is TSFDQFQLLPVVRNSISSQALPGLVDVTPTPIQR. A compositionally biased stretch (basic and acidic residues) spans 180 to 193; that stretch reads LLEEPKTEKKPTKA. Positions 180-199 are disordered; sequence LLEEPKTEKKPTKADDDEPQ. The region spanning 194–406 is the Helicase ATP-binding domain; sequence DDDEPQYDQY…RKRYPDIKRL (213 aa). 207 to 214 provides a ligand contact to ATP; the sequence is AETGSGKT. The disordered stretch occupies residues 229 to 249; it reads EARDKELEKKEQEEKAREREE. A DEAD box motif is present at residues 353–356; sequence DEAD. The Helicase C-terminal domain maps to 455-631; sequence GPYASYVAPK…EGMFRGQALI (177 aa).

The protein belongs to the DEAD box helicase family. MRH4 subfamily.

It is found in the mitochondrion. The enzyme catalyses ATP + H2O = ADP + phosphate + H(+). In terms of biological role, ATP-binding RNA helicase involved in mitochondrial RNA metabolism. Required for maintenance of mitochondrial DNA. The polypeptide is ATP-dependent RNA helicase mrh4, mitochondrial (mrh4) (Neosartorya fischeri (strain ATCC 1020 / DSM 3700 / CBS 544.65 / FGSC A1164 / JCM 1740 / NRRL 181 / WB 181) (Aspergillus fischerianus)).